Here is a 188-residue protein sequence, read N- to C-terminus: ATP synthase subunit delta (188 aa).

This sequence belongs to the ATPase delta chain family. F-type ATPases have 2 components, F(1) - the catalytic core - and F(0) - the membrane proton channel. F(1) has five subunits: alpha(3), beta(3), gamma(1), delta(1), epsilon(1). F(0) has three main subunits: a(1), b(2) and c(10-14). The alpha and beta chains form an alternating ring which encloses part of the gamma chain. F(1) is attached to F(0) by a central stalk formed by the gamma and epsilon chains, while a peripheral stalk is formed by the delta and b chains.

It is found in the cell inner membrane. In terms of biological role, f(1)F(0) ATP synthase produces ATP from ADP in the presence of a proton or sodium gradient. F-type ATPases consist of two structural domains, F(1) containing the extramembraneous catalytic core and F(0) containing the membrane proton channel, linked together by a central stalk and a peripheral stalk. During catalysis, ATP synthesis in the catalytic domain of F(1) is coupled via a rotary mechanism of the central stalk subunits to proton translocation. This protein is part of the stalk that links CF(0) to CF(1). It either transmits conformational changes from CF(0) to CF(1) or is implicated in proton conduction. This chain is ATP synthase subunit delta, found in Rhizobium etli (strain ATCC 51251 / DSM 11541 / JCM 21823 / NBRC 15573 / CFN 42).